The sequence spans 80 residues: Nuclear protein 1 (80 aa).

2 disordered regions span residues 1–21 (MATL…EDED) and 38–80 (VGGG…KAWR). Over residues 61–80 (GHERKLLTKFQNSERKKAWR) the composition is skewed to basic and acidic residues. The Nuclear localization signal signature appears at 64–80 (RKLLTKFQNSERKKAWR).

It belongs to the NUPR family. As to quaternary structure, monomer. Directly interacts with MSL1 and binds MORF4L1, two components of histone acetyltransferase complex; the interaction with MORF4L1 may be mediated by MSL1. Interacts with EP300; this interaction enhances the effect of EP300 on PAX2 transcription factor activity. Interacts with PAXIP1; this interaction prevents PAXIP1 inhibition of PAX2 transcription factor activity. Interacts with COPS5; this interaction allows COPS5-dependent CDKN1B nuclear to cytoplasm translocation. Interacts with RNF2. Interacts with FOXO3; this interaction represses FOXO3 transactivation. Interacts with PTMA; regulates apoptotic process. Interacts with MYOD1, EP300 and DDX5; this interaction coordinates the association of anti-proliferative and pro-myogenic proteins at the myogenin promoter. Interacts with TP53; interaction is stress-dependent. Forms a complex with EP300 and TP53; this complex binds CDKN1A promoter leading to transcriptional induction of CDKN1A. Phosphorylated. Phosphorylation promotes DNA-binding activity. In terms of processing, acetylated. Highly expressed in pancreas and both ovaries and testes.

The protein localises to the nucleus. It is found in the cytoplasm. The protein resides in the perinuclear region. In terms of biological role, transcription regulator that converts stress signals into a program of gene expression that empowers cells with resistance to the stress induced by a change in their microenvironment. Thereby participates in the regulation of many processes namely cell-cycle, apoptosis, autophagy and DNA repair responses. Controls cell cycle progression and protects cells from genotoxic stress induced by doxorubicin through the complex formation with TP53 and EP300 that binds CDKN1A promoter leading to transcriptional induction of CDKN1A. Protects pancreatic cancer cells from stress-induced cell death by binding the RELB promoter and activating its transcription, leading to IER3 transactivation. Negatively regulates apoptosis through interaction with PTMA. Inhibits autophagy-induced apoptosis in cardiac cells through FOXO3 interaction, inducing cytoplasmic translocation of FOXO3 thereby preventing the FOXO3 association with the pro-autophagic BNIP3 promoter. Inhibits cell growth and facilitates programmed cell death by apoptosis after adriamycin-induced DNA damage through transactivation of TP53. Regulates methamphetamine-induced apoptosis and autophagy through DDIT3-mediated endoplasmic reticulum stress pathway. Participates in DNA repair following gamma-irradiation by facilitating DNA access of the transcription machinery through interaction with MSL1 leading to inhibition of histone H4' Lys-16' acetylation (H4K16ac). Coactivator of PAX2 transcription factor activity, both by recruiting the EP300 cofactor to increase PAX2 transcription factor activity and by binding PAXIP1 to suppress PAXIP1-induced inhibition on PAX2. Positively regulates cell cycle progression through interaction with COPS5 inducing cytoplasmic translocation of CDKN1B leading to the CDKN1B degradation. Coordinates, through its interaction with EP300, the assiociation of MYOD1, EP300 and DDX5 to the MYOG promoter, leading to inhibition of cell-cycle progression and myogenic differentiation promotion. Negatively regulates beta cell proliferation via inhibition of cell-cycle regulatory genes expression through the suppression of their promoter activities. Also required for LHB expression and ovarian maturation. Exacerbates CNS inflammation and demyelination upon cuprizone treatment. This Mus musculus (Mouse) protein is Nuclear protein 1.